The chain runs to 263 residues: Putative SNAP25 homologous protein SNAP30 (263 aa).

Disordered regions lie at residues 1 to 61 (MFGF…LQSQ) and 132 to 209 (NLGG…DGLS). Polar residues-rich tracts occupy residues 8-34 (PGNN…TSSE) and 52-61 (FNDSGGLQSQ). Residues 158–173 (KPSKKSENHKEEREKL) are compositionally biased toward basic and acidic residues. Residues 180–194 (RSSSQPALDQPTNAL) are compositionally biased toward polar residues. A compositionally biased stretch (basic and acidic residues) spans 197 to 206 (VEQEKAKQDD). A t-SNARE coiled-coil homology domain is found at 198 to 260 (EQEKAKQDDG…QGANQRARHL (63 aa)).

Belongs to the SNAP-25 family.

Its subcellular location is the membrane. It is found in the cytoplasm. In terms of biological role, vesicle trafficking protein that functions in the secretory pathway. The protein is Putative SNAP25 homologous protein SNAP30 (SNAP30) of Arabidopsis thaliana (Mouse-ear cress).